Here is a 147-residue protein sequence, read N- to C-terminus: Hemoglobin subunit beta (147 aa).

Valine 2 is subject to N-acetylvaline. Residues histidine 3–histidine 147 form the Globin domain. Phosphothreonine is present on threonine 13. Serine 45 carries the post-translational modification Phosphoserine. At lysine 60 the chain carries N6-acetyllysine. Histidine 64 provides a ligand contact to heme b. At lysine 83 the chain carries N6-acetyllysine. Histidine 93 contributes to the heme b binding site. S-nitrosocysteine is present on cysteine 94. Lysine 145 is subject to N6-acetyllysine.

This sequence belongs to the globin family. In terms of assembly, heterotetramer of two alpha chains and two beta chains. Red blood cells.

In terms of biological role, involved in oxygen transport from the lung to the various peripheral tissues. This chain is Hemoglobin subunit beta (HBB), found in Alouatta belzebul (Red-handed howler monkey).